The chain runs to 162 residues: Lectin BRA-3 (162 aa).

The first 24 residues, 1 to 24 (MQRSEIVQAVTLLVVVFAITTAEC), serve as a signal peptide directing secretion. One can recognise a C-type lectin domain in the interval 25-152 (TCPGNLDWQE…NKNKNFLCKM (128 aa)). Cystine bridges form between cysteine 26–cysteine 39, cysteine 56–cysteine 150, and cysteine 125–cysteine 142.

In terms of assembly, homotetramer; disulfide-linked. Coelemic fluid.

In terms of biological role, sugar-binding protein which recognizes specific carbohydrate structures and agglutinates a variety of animal cells by binding to cell-surface glycoproteins and glycolipids. Calcium-dependent lectin. Invertebrate lectins may be involved in defense functions. In Megabalanus rosa (Acorn barnacle), this protein is Lectin BRA-3.